Reading from the N-terminus, the 275-residue chain is Large ribosomal subunit protein uL2 (275 aa).

Positions 214–275 are disordered; the sequence is RWRGNRPTVR…NKFILSHRNK (62 aa). Over residues 255–275 the composition is skewed to basic residues; sequence KGKKTRSNKRTNKFILSHRNK.

This sequence belongs to the universal ribosomal protein uL2 family. In terms of assembly, part of the 50S ribosomal subunit. Forms a bridge to the 30S subunit in the 70S ribosome.

One of the primary rRNA binding proteins. Required for association of the 30S and 50S subunits to form the 70S ribosome, for tRNA binding and peptide bond formation. It has been suggested to have peptidyltransferase activity; this is somewhat controversial. Makes several contacts with the 16S rRNA in the 70S ribosome. The chain is Large ribosomal subunit protein uL2 from Blochmanniella pennsylvanica (strain BPEN).